The chain runs to 513 residues: ATP synthase subunit alpha (513 aa).

169–176 (GDRQTGKT) is a binding site for ATP.

This sequence belongs to the ATPase alpha/beta chains family. In terms of assembly, F-type ATPases have 2 components, CF(1) - the catalytic core - and CF(0) - the membrane proton channel. CF(1) has five subunits: alpha(3), beta(3), gamma(1), delta(1), epsilon(1). CF(0) has three main subunits: a(1), b(2) and c(9-12). The alpha and beta chains form an alternating ring which encloses part of the gamma chain. CF(1) is attached to CF(0) by a central stalk formed by the gamma and epsilon chains, while a peripheral stalk is formed by the delta and b chains.

It localises to the cell inner membrane. The catalysed reaction is ATP + H2O + 4 H(+)(in) = ADP + phosphate + 5 H(+)(out). Produces ATP from ADP in the presence of a proton gradient across the membrane. The alpha chain is a regulatory subunit. This is ATP synthase subunit alpha from Ralstonia pickettii (strain 12J).